An 801-amino-acid chain; its full sequence is Ribosome biogenesis protein ERB1 (801 aa).

Disordered stretches follow at residues 1 to 135 and 358 to 377; these read MGSK…LEDR and PEYLPTKEEREEWEKMDPED. Residues 35–90 show a composition bias toward acidic residues; sequence SEDEEDYIPSSEVDEDDDDDADESASEDSDDSNDSEDDEVEEDDEALLSDEIPSEG. Basic and acidic residues-rich tracts occupy residues 91–113, 124–135, and 362–377; these read ESEKDQDLAESKESKQDQDKEPS, PPRKEDEELEDR, and PTKEEREEWEKMDPED. WD repeat units follow at residues 451-490 and 494-534; these read GHEGRVRSVAIDPTGVALATGGDDGTVRVWELLTGRQVWS and NGDE…VTPA. A disordered region spans residues 546–570; sequence GFGHATNGKQQANLPPGKEPPGKWA. 5 WD repeats span residues 586-628, 631-669, 672-711, 715-755, and 771-801; these read TVRS…TQIP, KLNGLAQTASFHPLRPLFFVATQRSIRCYDLQKLELVKI, PGAKWISSFDVHPGGDNLVVGSYDKRLLWHDLDLSNRPYK, FHTE…DQLE, and VNKLGVLDIDWHPREPWCVSAGADGTARLWM.

It belongs to the WD repeat BOP1/ERB1 family. As to quaternary structure, component of the NOP7 complex, composed of ERB1, NOP7 and YTM1. The complex is held together by ERB1, which interacts with NOP7 via its N-terminal domain and with YTM1 via a high-affinity interaction between the seven-bladed beta-propeller domains of the 2 proteins. The NOP7 complex associates with the 66S pre-ribosome.

The protein localises to the nucleus. It is found in the nucleolus. It localises to the nucleoplasm. Its function is as follows. Component of the NOP7 complex, which is required for maturation of the 25S and 5.8S ribosomal RNAs and formation of the 60S ribosome. The protein is Ribosome biogenesis protein ERB1 of Chaetomium thermophilum (strain DSM 1495 / CBS 144.50 / IMI 039719) (Thermochaetoides thermophila).